A 536-amino-acid chain; its full sequence is Membrane protein insertase YidC (536 aa).

Helical transmembrane passes span 7-27, 338-358, 419-439, 453-473, and 494-514; these read FFIFAFLFVSFLLWQAWQSQS, LLSTIHNFIGNWGFSIILITF, LPVFIQMPIFLSLYYMLIGSV, LSDQDPYYVLPIFMGLTMFFI, and PFIFTVFFLWFPSGLVLYYIV.

Belongs to the OXA1/ALB3/YidC family. Type 1 subfamily. Interacts with the Sec translocase complex via SecD. Specifically interacts with transmembrane segments of nascent integral membrane proteins during membrane integration.

Its subcellular location is the cell membrane. Required for the insertion and/or proper folding and/or complex formation of integral membrane proteins into the membrane. Involved in integration of membrane proteins that insert both dependently and independently of the Sec translocase complex, as well as at least some lipoproteins. Aids folding of multispanning membrane proteins. This Buchnera aphidicola subsp. Schizaphis graminum (strain Sg) protein is Membrane protein insertase YidC.